The chain runs to 89 residues: Small ribosomal subunit protein uS15 (89 aa).

It belongs to the universal ribosomal protein uS15 family. As to quaternary structure, part of the 30S ribosomal subunit. Forms a bridge to the 50S subunit in the 70S ribosome, contacting the 23S rRNA.

Functionally, one of the primary rRNA binding proteins, it binds directly to 16S rRNA where it helps nucleate assembly of the platform of the 30S subunit by binding and bridging several RNA helices of the 16S rRNA. In terms of biological role, forms an intersubunit bridge (bridge B4) with the 23S rRNA of the 50S subunit in the ribosome. This is Small ribosomal subunit protein uS15 from Lactiplantibacillus plantarum (strain ATCC BAA-793 / NCIMB 8826 / WCFS1) (Lactobacillus plantarum).